The sequence spans 251 residues: Cell division protein ZapD (251 aa).

The protein belongs to the ZapD family. In terms of assembly, interacts with FtsZ.

It localises to the cytoplasm. Cell division factor that enhances FtsZ-ring assembly. Directly interacts with FtsZ and promotes bundling of FtsZ protofilaments, with a reduction in FtsZ GTPase activity. This chain is Cell division protein ZapD, found in Paraburkholderia xenovorans (strain LB400).